The sequence spans 855 residues: MESRYNPTEIEPKWQASWAKQGLDATPEDTSKPKFYALSMFPYPSGSLHVGHTRNYVITDVIARLKRMQGYRVLQPMGWDAFGLPAENAAIARGIHPAEWTYANMAQMKKQLEPLGLSIDWSREIATCSPDYYRWTQWIFLQFLDMGLAYQKEAAVNWDPVDQTVLANEQVDNEGRSWRSGAKVERKLLRQWFLKITDYAEELLTDLDKLTGWPERVKTMQANWIGKSVGAYLEFPIVGMDEKVAVFTTRPDTVYGVTYVVLAPEHPLTPQVTSKAQKKAVDKFIEAVGAESEMDRTAEDKPKKGIPTGGKAINPFTGEEIPIWIADYVLYEYGTGAVMGVPAHDTRDFVFAQQNKLPIQTVIVPEGGDAETPLEAAYTEPGLMVNSGEFDGKVSTEGKQAIIAKAETKGWGKARVQYRLRDWLISRQRYWGVPIPVIHCPNCGAVPVPEADLPVELPEDVEFSAQGGSPLAKLESWVNVACPNCGADAKRETDTMDTFIDSSWYFLRYPDAKNDKAVFDSAKTNDWLPVDQYVGGIEHAILHLLYSRFFTKVMRDRKLLNFDEPFKKLLTQGMVQALTYKNPETGQYIAPINVDADDPKDPETGAPLEAFYEKMSKSKYNGVPPEEVTNKYGADTARLFTLFKAPPEKDLEWEGADVEGQFRFLNRVWRLVSEHAAQAKGKKAKVNKAKLSKTEKELRRSIHIAIKETSEDLDGDYQFNTAVSELMKLSNALSDSKEKASPVYAEGVETLLLLLTPFAPHISEELWENLGHSESILGQTWPQVDEEALVADEITLVIQIMGKTRGTIQVPAGSSREDLEQLARESEVAQRYIAGKEVKKVIVVPGKLVNFVVPK.

Positions 42-52 (PYPSGSLHVGH) match the 'HIGH' region motif. A disordered region spans residues 292–311 (SEMDRTAEDKPKKGIPTGGK). Basic and acidic residues predominate over residues 293 to 303 (EMDRTAEDKPK). Positions 614–618 (KMSKS) match the 'KMSKS' region motif. K617 lines the ATP pocket.

This sequence belongs to the class-I aminoacyl-tRNA synthetase family.

It is found in the cytoplasm. The catalysed reaction is tRNA(Leu) + L-leucine + ATP = L-leucyl-tRNA(Leu) + AMP + diphosphate. This is Leucine--tRNA ligase from Acaryochloris marina (strain MBIC 11017).